Here is an 820-residue protein sequence, read N- to C-terminus: Serine/threonine-protein phosphatase 4 regulatory subunit 3-A (820 aa).

The WH1 domain maps to 1–100 (MSDTRRRVKV…DEIWEKICQV (100 aa)). The span at 682–694 (ELWFNEDDEEEGE) shows a compositional bias: acidic residues. Disordered stretches follow at residues 682-712 (ELWFNEDDEEEGEAVVPPVEKTKPEDDFPEG) and 750-820 (AANG…RLGS). A compositionally biased stretch (basic and acidic residues) spans 701-712 (EKTKPEDDFPEG). 2 stretches are compositionally biased toward polar residues: residues 750-761 (AANGANSTNSKS) and 768-790 (PATSNGSSSKNTSLTTTVASTKG). Over residues 798–809 (YPDDEDEEEEED) the composition is skewed to acidic residues.

This sequence belongs to the SMEK family. Serine/threonine-protein phosphatase 4 (PP4) occurs in different assemblies of the catalytic and one or more regulatory subunits.

Regulatory subunit of serine/threonine-protein phosphatase 4 (PP4). This Xenopus laevis (African clawed frog) protein is Serine/threonine-protein phosphatase 4 regulatory subunit 3-A.